The sequence spans 486 residues: Siroheme synthase (486 aa).

Positions 1 to 204 (MNYLPIFVDL…HQIEQAEALV (204 aa)) are precorrin-2 dehydrogenase /sirohydrochlorin ferrochelatase. Residues 22–23 (HV) and 43–44 (EK) each bind NAD(+). Serine 128 carries the phosphoserine modification. The tract at residues 216 to 486 (GEVSLVGAGP…NKETHWKQAA (271 aa)) is uroporphyrinogen-III C-methyltransferase. Proline 225 contacts S-adenosyl-L-methionine. Aspartate 248 (proton acceptor) is an active-site residue. Catalysis depends on lysine 270, which acts as the Proton donor. Residues 301–303 (GGD), valine 306, 331–332 (TA), methionine 383, and glycine 412 each bind S-adenosyl-L-methionine.

The protein in the N-terminal section; belongs to the precorrin-2 dehydrogenase / sirohydrochlorin ferrochelatase family. It in the C-terminal section; belongs to the precorrin methyltransferase family.

It catalyses the reaction uroporphyrinogen III + 2 S-adenosyl-L-methionine = precorrin-2 + 2 S-adenosyl-L-homocysteine + H(+). It carries out the reaction precorrin-2 + NAD(+) = sirohydrochlorin + NADH + 2 H(+). The catalysed reaction is siroheme + 2 H(+) = sirohydrochlorin + Fe(2+). The protein operates within cofactor biosynthesis; adenosylcobalamin biosynthesis; precorrin-2 from uroporphyrinogen III: step 1/1. It functions in the pathway cofactor biosynthesis; adenosylcobalamin biosynthesis; sirohydrochlorin from precorrin-2: step 1/1. Its pathway is porphyrin-containing compound metabolism; siroheme biosynthesis; precorrin-2 from uroporphyrinogen III: step 1/1. It participates in porphyrin-containing compound metabolism; siroheme biosynthesis; siroheme from sirohydrochlorin: step 1/1. The protein operates within porphyrin-containing compound metabolism; siroheme biosynthesis; sirohydrochlorin from precorrin-2: step 1/1. Its function is as follows. Multifunctional enzyme that catalyzes the SAM-dependent methylations of uroporphyrinogen III at position C-2 and C-7 to form precorrin-2 via precorrin-1. Then it catalyzes the NAD-dependent ring dehydrogenation of precorrin-2 to yield sirohydrochlorin. Finally, it catalyzes the ferrochelation of sirohydrochlorin to yield siroheme. The sequence is that of Siroheme synthase from Actinobacillus pleuropneumoniae serotype 7 (strain AP76).